The sequence spans 267 residues: Tryptophan synthase alpha chain (267 aa).

Residues E49 and D60 each act as proton acceptor in the active site.

The protein belongs to the TrpA family. In terms of assembly, tetramer of two alpha and two beta chains.

The enzyme catalyses (1S,2R)-1-C-(indol-3-yl)glycerol 3-phosphate + L-serine = D-glyceraldehyde 3-phosphate + L-tryptophan + H2O. The protein operates within amino-acid biosynthesis; L-tryptophan biosynthesis; L-tryptophan from chorismate: step 5/5. In terms of biological role, the alpha subunit is responsible for the aldol cleavage of indoleglycerol phosphate to indole and glyceraldehyde 3-phosphate. In Acinetobacter baumannii (strain AB307-0294), this protein is Tryptophan synthase alpha chain.